Consider the following 328-residue polypeptide: Biotin synthase (328 aa).

In terms of domain architecture, Radical SAM core spans 48–275 (NRIQLSKLLN…KSHVRLTAGR (228 aa)). 3 residues coordinate [4Fe-4S] cluster: C63, C67, and C70. [2Fe-2S] cluster-binding residues include C107, C138, C198, and R270.

This sequence belongs to the radical SAM superfamily. Biotin synthase family. Homodimer. [4Fe-4S] cluster serves as cofactor. The cofactor is [2Fe-2S] cluster.

It carries out the reaction (4R,5S)-dethiobiotin + (sulfur carrier)-SH + 2 reduced [2Fe-2S]-[ferredoxin] + 2 S-adenosyl-L-methionine = (sulfur carrier)-H + biotin + 2 5'-deoxyadenosine + 2 L-methionine + 2 oxidized [2Fe-2S]-[ferredoxin]. It participates in cofactor biosynthesis; biotin biosynthesis; biotin from 7,8-diaminononanoate: step 2/2. Its function is as follows. Catalyzes the conversion of dethiobiotin (DTB) to biotin by the insertion of a sulfur atom into dethiobiotin via a radical-based mechanism. The polypeptide is Biotin synthase (Brucella ovis (strain ATCC 25840 / 63/290 / NCTC 10512)).